A 305-amino-acid chain; its full sequence is tRNA pseudouridine synthase B (305 aa).

D48 serves as the catalytic Nucleophile.

Belongs to the pseudouridine synthase TruB family. Type 1 subfamily.

The enzyme catalyses uridine(55) in tRNA = pseudouridine(55) in tRNA. Responsible for synthesis of pseudouridine from uracil-55 in the psi GC loop of transfer RNAs. The chain is tRNA pseudouridine synthase B from Pseudomonas putida (strain ATCC 700007 / DSM 6899 / JCM 31910 / BCRC 17059 / LMG 24140 / F1).